A 323-amino-acid polypeptide reads, in one-letter code: Type II restriction enzyme BsoBI (323 aa).

Positions 212, 240, and 242 each coordinate Mg(2+).

In terms of assembly, homodimer.

The enzyme catalyses Endonucleolytic cleavage of DNA to give specific double-stranded fragments with terminal 5'-phosphates.. Functionally, a P subtype restriction enzyme that recognizes the double-stranded sequence 5'-CYCGRG-3' and cleaves after C-1. This Geobacillus stearothermophilus (Bacillus stearothermophilus) protein is Type II restriction enzyme BsoBI.